Here is a 179-residue protein sequence, read N- to C-terminus: tRNA (cytidine(56)-2'-O)-methyltransferase (179 aa).

Residues leucine 82, 112-116 (GAEKV), and 130-137 (VGNQPHSE) each bind S-adenosyl-L-methionine.

It belongs to the aTrm56 family. Homodimer.

It is found in the cytoplasm. The enzyme catalyses cytidine(56) in tRNA + S-adenosyl-L-methionine = 2'-O-methylcytidine(56) in tRNA + S-adenosyl-L-homocysteine + H(+). Its function is as follows. Specifically catalyzes the AdoMet-dependent 2'-O-ribose methylation of cytidine at position 56 in tRNAs. The protein is tRNA (cytidine(56)-2'-O)-methyltransferase of Methanococcus maripaludis (strain C7 / ATCC BAA-1331).